Here is a 491-residue protein sequence, read N- to C-terminus: Cobyric acid synthase (491 aa).

Residues 246–435 (KIDVAVIKLP…IHGIFDGANF (190 aa)) form the GATase cobBQ-type domain. Cys-327 serves as the catalytic Nucleophile. His-427 is a catalytic residue.

It belongs to the CobB/CobQ family. CobQ subfamily.

It functions in the pathway cofactor biosynthesis; adenosylcobalamin biosynthesis. Catalyzes amidations at positions B, D, E, and G on adenosylcobyrinic A,C-diamide. NH(2) groups are provided by glutamine, and one molecule of ATP is hydrogenolyzed for each amidation. The sequence is that of Cobyric acid synthase from Clostridium acetobutylicum (strain ATCC 824 / DSM 792 / JCM 1419 / IAM 19013 / LMG 5710 / NBRC 13948 / NRRL B-527 / VKM B-1787 / 2291 / W).